The chain runs to 143 residues: Ribosome-binding factor A (143 aa).

Positions 117–143 (DAEIARRSQGAMPAGEADPYRHSDEEE) are disordered. A compositionally biased stretch (basic and acidic residues) spans 134 to 143 (DPYRHSDEEE).

It belongs to the RbfA family. Monomer. Binds 30S ribosomal subunits, but not 50S ribosomal subunits or 70S ribosomes.

The protein resides in the cytoplasm. In terms of biological role, one of several proteins that assist in the late maturation steps of the functional core of the 30S ribosomal subunit. Associates with free 30S ribosomal subunits (but not with 30S subunits that are part of 70S ribosomes or polysomes). Required for efficient processing of 16S rRNA. May interact with the 5'-terminal helix region of 16S rRNA. This chain is Ribosome-binding factor A, found in Cutibacterium acnes (strain DSM 16379 / KPA171202) (Propionibacterium acnes).